The chain runs to 132 residues: Myelin P2 protein (132 aa).

The residue at position 2 (Ser2) is an N-acetylserine. Arg107 lines the (9Z)-octadecenoate pocket. Arg107 contributes to the hexadecanoate binding site. Cys118 and Cys125 are joined by a disulfide. Position 127–129 (Arg127–Tyr129) interacts with (9Z)-octadecenoate. Residue Arg127 to Tyr129 coordinates hexadecanoate.

This sequence belongs to the calycin superfamily. Fatty-acid binding protein (FABP) family. As to quaternary structure, monomer.

The protein resides in the cytoplasm. Functionally, may play a role in lipid transport protein in Schwann cells. May bind cholesterol. The protein is Myelin P2 protein (PMP2) of Bos taurus (Bovine).